We begin with the raw amino-acid sequence, 274 residues long: Deoxyribonuclease TATDN3 (274 aa).

Residues histidine 12, histidine 14, glutamate 107, histidine 147, histidine 170, and aspartate 218 each contribute to the Zn(2+) site.

Belongs to the metallo-dependent hydrolases superfamily. TatD-type hydrolase family. Requires Mn(2+) as cofactor. The cofactor is Ca(2+). Mg(2+) serves as cofactor. Zn(2+) is required as a cofactor.

It localises to the nucleus. Its activity is regulated as follows. The 3'-exonuclease activity is sensitive to the metal ion present in the active site, whereas the AP endodeoxyribonuclease activity is observed in a variety of divalent metal cofactors. 3'-exoxonuclease activity is suppressed in the presence of Ca(2+), Zn(2+) and Ni(2+). Functionally, exhibits 3'-exonuclease activities and apurinic/apyrimidinic (AP) endonuclease (in vitro). Show preferential AP endonuclease activity on double-stranded DNA substrates and 3'- exonuclease activity on single-stranded DNA. The polypeptide is Deoxyribonuclease TATDN3 (TATDN3) (Homo sapiens (Human)).